The chain runs to 115 residues: U3-lycotoxin-Ls1a (115 aa).

An N-terminal signal peptide occupies residues 1–20 (MKFVLLFGVFLVTLFSYSSA). The propeptide occupies 21–44 (EMLDDFGQADEDELLSLIEKEEAR). 4 disulfide bridges follow: Cys-48–Cys-63, Cys-55–Cys-72, Cys-62–Cys-87, and Cys-74–Cys-85.

Belongs to the neurotoxin 19 (CSTX) family. 01 subfamily. In terms of tissue distribution, expressed by the venom gland.

It localises to the secreted. In Lycosa singoriensis (Wolf spider), this protein is U3-lycotoxin-Ls1a.